Here is a 93-residue protein sequence, read N- to C-terminus: Acylphosphatase (93 aa).

The 88-residue stretch at 4–91 folds into the Acylphosphatase-like domain; that stretch reads TLHLVIHGRV…PAGTGFRVAA (88 aa). Catalysis depends on residues arginine 19 and asparagine 37.

This sequence belongs to the acylphosphatase family.

The enzyme catalyses an acyl phosphate + H2O = a carboxylate + phosphate + H(+). The sequence is that of Acylphosphatase (acyP) from Azorhizobium caulinodans (strain ATCC 43989 / DSM 5975 / JCM 20966 / LMG 6465 / NBRC 14845 / NCIMB 13405 / ORS 571).